The following is a 70-amino-acid chain: Turripeptide Lol9.1 (70 aa).

Residues 1 to 20 form the signal peptide; sequence MKVYCLLLVLLVGLVSQAHG. The region spanning 21–70 is the Kazal-like domain; it reads KPTKRCLSVCSAEYEPVCGSDGKTYANKCHLMTEACWSPTSITLVHEGKC. 3 disulfides stabilise this stretch: Cys-26–Cys-56, Cys-30–Cys-49, and Cys-38–Cys-70.

This sequence belongs to the conopeptide P-like superfamily. As to expression, expressed by the venom duct.

The protein resides in the secreted. Its function is as follows. Acts as a neurotoxin by inhibiting an ion channel. May also act as a serine protease inhibitor, since it possess the kazal serine protease inhibitor signature. The sequence is that of Turripeptide Lol9.1 from Iotyrris olangoensis (Sea snail).